The sequence spans 108 residues: Small ribosomal subunit protein mS33 (108 aa).

The segment at Leu84 to Lys108 is disordered.

Belongs to the mitochondrion-specific ribosomal protein mS33 family. Component of the mitochondrial small ribosomal subunit (mt-SSU). Mature N.crassa 74S mitochondrial ribosomes consist of a small (37S) and a large (54S) subunit. The 37S small subunit contains a 16S ribosomal RNA (16S mt-rRNA) and 32 different proteins. The 54S large subunit contains a 23S rRNA (23S mt-rRNA) and 42 different proteins.

Its subcellular location is the mitochondrion. Component of the mitochondrial ribosome (mitoribosome), a dedicated translation machinery responsible for the synthesis of mitochondrial genome-encoded proteins, including at least some of the essential transmembrane subunits of the mitochondrial respiratory chain. The mitoribosomes are attached to the mitochondrial inner membrane and translation products are cotranslationally integrated into the membrane. The protein is Small ribosomal subunit protein mS33 (rsm27) of Neurospora crassa (strain ATCC 24698 / 74-OR23-1A / CBS 708.71 / DSM 1257 / FGSC 987).